We begin with the raw amino-acid sequence, 366 residues long: tRNA(Met) cytidine acetate ligase (366 aa).

ATP is bound by residues 7–20, glycine 96, asparagine 152, and arginine 175; that span reads IAEF…HKYL.

This sequence belongs to the TmcAL family.

It localises to the cytoplasm. It catalyses the reaction cytidine(34) in elongator tRNA(Met) + acetate + ATP = N(4)-acetylcytidine(34) in elongator tRNA(Met) + AMP + diphosphate. In terms of biological role, catalyzes the formation of N(4)-acetylcytidine (ac(4)C) at the wobble position of elongator tRNA(Met), using acetate and ATP as substrates. First activates an acetate ion to form acetyladenylate (Ac-AMP) and then transfers the acetyl group to tRNA to form ac(4)C34. In Streptococcus mutans serotype c (strain ATCC 700610 / UA159), this protein is tRNA(Met) cytidine acetate ligase.